Here is a 573-residue protein sequence, read N- to C-terminus: MLFNEFCKIIEKIENTPKRLEKIDYFVEIIDFVKNHGKPENLKEICQVSIGRVFAEYENREIGIGPNLLIEAIKTTGISENDLNLKIKETGDIGISVEHLSSKIKQISLFNEPLTFEEVYSTIKKLSTIEGTSSQKKKIRIISNLLIIANPIESRYISRLILEDMRIGMNIPTILAAFSNYFGIEKEKIEKVYAVTNDIGLIGKKLLENSNFEEDPELNLTVFRPIKPMLAQLTPSIEEAVIEMKNPQFETKYDGARVQVHKSNGEVKIYSRRLEDITNSVPELVLEIKNLEVDNVILEGECVAMNLENGKPRPFQDILRRFRRKYDIDKMTEEVSLRIYFFDILYHNKGLIDLPLFERRNILENIFGTNNWDLELKKIENEIKSNKMLFTSFKVSSTDLKIAKEFFKWSLSIGHEGIMVKNLNAIYTPGSRVKTMCKIKQTLENLDVVVTRAKIGMGKRKDWYGSYEISVKGDDESLHVIGNVGSGLTEEDLEKLTKIANEIKIEDLGGEVILEPKIVLEVTYEEIQTSEKYEMGYALRFPRVVGIREDKSINDINSLDDVKKIYEIERKRK.

Glutamate 250 contacts ATP. Lysine 252 serves as the catalytic N6-AMP-lysine intermediate. ATP-binding residues include arginine 257, arginine 272, glutamate 301, phenylalanine 342, arginine 432, and lysine 438.

The protein belongs to the ATP-dependent DNA ligase family. Requires Mg(2+) as cofactor.

It carries out the reaction ATP + (deoxyribonucleotide)n-3'-hydroxyl + 5'-phospho-(deoxyribonucleotide)m = (deoxyribonucleotide)n+m + AMP + diphosphate.. Its function is as follows. DNA ligase that seals nicks in double-stranded DNA during DNA replication, DNA recombination and DNA repair. This chain is DNA ligase, found in Methanococcus vannielii (strain ATCC 35089 / DSM 1224 / JCM 13029 / OCM 148 / SB).